Reading from the N-terminus, the 522-residue chain is Calcium-dependent protein kinase 4 (522 aa).

The segment covering 1–10 has biased composition (polar residues); sequence MGACFSSHTA. The tract at residues 1–43 is disordered; the sequence is MGACFSSHTATAAADGGSGKRQQRKGDHKGKLPDGGGGEKEKE. Residue glycine 2 is the site of N-myristoyl glycine attachment. Residues 29-43 are compositionally biased toward basic and acidic residues; it reads KGKLPDGGGGEKEKE. Residues 59–319 enclose the Protein kinase domain; the sequence is YQVGRLLGHG…AAQALSHPWV (261 aa). ATP contacts are provided by residues 65–73 and lysine 88; that span reads LGHGQFGYT. The active-site Proton acceptor is aspartate 185. The interval 325–355 is autoinhibitory domain; that stretch reads ASEIPVDISVLSNMRQFVKYSRFKQFALRAL. 4 consecutive EF-hand domains span residues 362–397, 399–434, 441–476, and 481–508; these read EELA…DLPW, LKGP…IHQM, RWGL…GLKG, and LLEE…ASMS. Ca(2+) contacts are provided by aspartate 375, aspartate 377, serine 379, serine 381, glutamate 386, aspartate 412, asparagine 414, aspartate 416, glutamate 423, aspartate 454, aspartate 456, aspartate 458, tyrosine 460, glutamate 465, aspartate 486, aspartate 488, aspartate 490, arginine 492, and glutamate 497.

The protein belongs to the protein kinase superfamily. Ser/Thr protein kinase family. CDPK subfamily.

Its subcellular location is the membrane. It carries out the reaction L-seryl-[protein] + ATP = O-phospho-L-seryl-[protein] + ADP + H(+). The enzyme catalyses L-threonyl-[protein] + ATP = O-phospho-L-threonyl-[protein] + ADP + H(+). With respect to regulation, activated by calcium. Autophosphorylation may play an important role in the regulation of the kinase activity. May play a role in signal transduction pathways that involve calcium as a second messenger. In Oryza sativa subsp. japonica (Rice), this protein is Calcium-dependent protein kinase 4.